The following is a 51-amino-acid chain: Large ribosomal subunit protein bL33 (51 aa).

The interval 1-21 is disordered; the sequence is MRDKIKLESGAGTGHFYTTTK.

Belongs to the bacterial ribosomal protein bL33 family.

This chain is Large ribosomal subunit protein bL33, found in Neisseria gonorrhoeae (strain ATCC 700825 / FA 1090).